We begin with the raw amino-acid sequence, 330 residues long: MTDLSKKVRAWGRRLLVGTAAAVTLPGLIGLAGGAPTAGAFSRPGLPVEYLQVPSAGMGRNIKVQFQSGGNNSPAVYLLDGLRAQDDYNGWDINTPAFEWYYQSGLSIIMPVGGQSSFYSDWYSPACGKAGCTTYKWETFLTSELPQYLQSNKSVKPTGSAAVGISMAGSSALILAAYHPQQFIYAGSLSALMDPSQGMGPSLIGLAMGDAGGYKASDMWGPSSDPAWQRNDPTIQIPKLVGNNTRLWVYCGNGTPSELGGANMPAEFLENFVRSSNLKFQDAYNAAGGHNAVFHFDQNGTHSWEYWGAQLNAMKPDLQGTLGATPGGGG.

A signal peptide spans 1-40; sequence MTDLSKKVRAWGRRLLVGTAAAVTLPGLIGLAGGAPTAGA. 82–83 is a binding site for substrate; it reads LR. Residues 98–108 form a fibronectin-binding region; sequence FEWYYQSGLSI. A disulfide bridge links Cys127 with Cys132. Substrate is bound by residues Ser166 and Asp194. Catalysis depends on Ser166, which acts as the Nucleophile. The active site involves Glu270. Substrate is bound by residues 272–275, Lys279, and 302–304; these read FVRS and HSW. His302 is a catalytic residue.

This sequence belongs to the mycobacterial A85 antigen family.

It localises to the secreted. The catalysed reaction is 2 alpha,alpha'-trehalose 6-mycolate = alpha,alpha'-trehalose 6,6'-bismycolate + alpha,alpha-trehalose. It catalyses the reaction an acyl-CoA + a 1,2-diacyl-sn-glycerol = a triacyl-sn-glycerol + CoA. The antigen 85 proteins (FbpA, FbpB, FbpC) are responsible for the high affinity of mycobacteria for fibronectin, a large adhesive glycoprotein, which facilitates the attachment of M.tuberculosis to murine alveolar macrophages (AMs). They also help to maintain the integrity of the cell wall by catalyzing the transfer of mycolic acids to cell wall arabinogalactan and through the synthesis of alpha,alpha-trehalose dimycolate (TDM, cord factor). They catalyze the transfer of a mycoloyl residue from one molecule of alpha,alpha-trehalose monomycolate (TMM) to another TMM, leading to the formation of TDM. This is Diacylglycerol acyltransferase/mycolyltransferase Ag85B (fbpB) from Mycobacterium scrofulaceum.